Here is an 83-residue protein sequence, read N- to C-terminus: Small ribosomal subunit protein uS17 (83 aa).

Belongs to the universal ribosomal protein uS17 family. As to quaternary structure, part of the 30S ribosomal subunit.

One of the primary rRNA binding proteins, it binds specifically to the 5'-end of 16S ribosomal RNA. This Magnetococcus marinus (strain ATCC BAA-1437 / JCM 17883 / MC-1) protein is Small ribosomal subunit protein uS17.